A 262-amino-acid chain; its full sequence is Acyl-[acyl-carrier-protein]--UDP-N-acetylglucosamine O-acyltransferase (262 aa).

This sequence belongs to the transferase hexapeptide repeat family. LpxA subfamily. As to quaternary structure, homotrimer.

Its subcellular location is the cytoplasm. It catalyses the reaction a (3R)-hydroxyacyl-[ACP] + UDP-N-acetyl-alpha-D-glucosamine = a UDP-3-O-[(3R)-3-hydroxyacyl]-N-acetyl-alpha-D-glucosamine + holo-[ACP]. It participates in glycolipid biosynthesis; lipid IV(A) biosynthesis; lipid IV(A) from (3R)-3-hydroxytetradecanoyl-[acyl-carrier-protein] and UDP-N-acetyl-alpha-D-glucosamine: step 1/6. Functionally, involved in the biosynthesis of lipid A, a phosphorylated glycolipid that anchors the lipopolysaccharide to the outer membrane of the cell. This Janthinobacterium sp. (strain Marseille) (Minibacterium massiliensis) protein is Acyl-[acyl-carrier-protein]--UDP-N-acetylglucosamine O-acyltransferase.